A 459-amino-acid polypeptide reads, in one-letter code: Ribulose bisphosphate carboxylase large chain (459 aa).

Lys4 carries the N6,N6,N6-trimethyllysine modification. Residues Asn113 and Thr163 each coordinate substrate. The active-site Proton acceptor is the Lys165. Lys167 is a substrate binding site. Lys191, Asp193, and Glu194 together coordinate Mg(2+). N6-carboxylysine is present on Lys191. Catalysis depends on His284, which acts as the Proton acceptor. Residues Arg285, His317, and Ser369 each contribute to the substrate site.

This sequence belongs to the RuBisCO large chain family. Type I subfamily. As to quaternary structure, heterohexadecamer of 8 large chains and 8 small chains; disulfide-linked. The disulfide link is formed within the large subunit homodimers. The cofactor is Mg(2+). The disulfide bond which can form in the large chain dimeric partners within the hexadecamer appears to be associated with oxidative stress and protein turnover.

It is found in the plastid. It localises to the chloroplast. It carries out the reaction 2 (2R)-3-phosphoglycerate + 2 H(+) = D-ribulose 1,5-bisphosphate + CO2 + H2O. The catalysed reaction is D-ribulose 1,5-bisphosphate + O2 = 2-phosphoglycolate + (2R)-3-phosphoglycerate + 2 H(+). In terms of biological role, ruBisCO catalyzes two reactions: the carboxylation of D-ribulose 1,5-bisphosphate, the primary event in carbon dioxide fixation, as well as the oxidative fragmentation of the pentose substrate in the photorespiration process. Both reactions occur simultaneously and in competition at the same active site. In Roridula gorgonias (South African fly bush), this protein is Ribulose bisphosphate carboxylase large chain.